Here is a 153-residue protein sequence, read N- to C-terminus: Guanyl-specific ribonuclease N1 (153 aa).

The first 20 residues, 1-20, serve as a signal peptide directing secretion; the sequence is MVQLLSAFVSLLSVVAVSGA. A propeptide spanning residues 21-49 is cleaved from the precursor; it reads AIPAPAPEAVVDVAPETATIEPTGNFTAQ. Cystine bridges form between Cys51/Cys59 and Cys55/Cys152. His89 is an active-site residue. Catalysis depends on Glu107, which acts as the Proton acceptor. His141 serves as the catalytic Proton donor.

Belongs to the ribonuclease N1/T1 family.

The catalysed reaction is [RNA] containing guanosine + H2O = an [RNA fragment]-3'-guanosine-3'-phosphate + a 5'-hydroxy-ribonucleotide-3'-[RNA fragment].. This chain is Guanyl-specific ribonuclease N1 (grn), found in Neurospora crassa (strain ATCC 24698 / 74-OR23-1A / CBS 708.71 / DSM 1257 / FGSC 987).